The sequence spans 109 residues: Death-associated protein-like 1 homolog (109 aa).

Disordered regions lie at residues 1–51 (MVQL…KPRS) and 76–100 (FPET…ISRI). A compositionally biased stretch (basic and acidic residues) spans 31–50 (KSADENANVEKETRKTDKPR).

It belongs to the DAP-DAPL1 family. As to quaternary structure, associates with ribosomes; preventing translation. Interacts with eiF5a (eif5a and eif5a2); preventing translation.

In terms of biological role, ribosome-binding protein that promotes ribosome hibernation, a process during which ribosomes are stabilized in an inactive state and preserved from proteasomal degradation. Acts via its association with eiF5a (eif5a and eif5a2) at the polypeptide exit tunnel of the ribosome, preventing mRNA translation. Plays a key role in ribosome hibernation in the mature egg by preventing mRNA translation, leading to ribosome inactivation. Ribosomes, which are produced in large quantities during oogenesis, are stored and translationally repressed in the egg and early embryo. The protein is Death-associated protein-like 1 homolog of Danio rerio (Zebrafish).